We begin with the raw amino-acid sequence, 341 residues long: Serine proteinase inhibitor 2 (341 aa).

This sequence belongs to the serpin family. Poxviruses subfamily.

Its subcellular location is the host cytoplasm. In terms of biological role, viral serpin that inhibits both cysteine and serine proteinases involved in the regulation of host inflammatory and apoptosis processes. Major anti-apoptotic protein which inhibits both intrinsic and extrinsic pathways and strongly cleaves host CASP1 and CASP8 but is a rather poor inhibitor of host CASP3. Prevents the proteolytic activity of host interleukin-1-beta converting enzyme (ICE) and ICE-like enzymes. Can also block apoptosis through host tumor necrosis factor (TNF) receptor. This is Serine proteinase inhibitor 2 (OPG199) from Bos taurus (Bovine).